Consider the following 81-residue polypeptide: Photosystem I iron-sulfur center (81 aa).

4Fe-4S ferredoxin-type domains follow at residues 2–31 (SHTV…MVPW) and 39–68 (IASA…VRVY). 8 residues coordinate [4Fe-4S] cluster: C11, C14, C17, C21, C48, C51, C54, and C58.

As to quaternary structure, the eukaryotic PSI reaction center is composed of at least 11 subunits. It depends on [4Fe-4S] cluster as a cofactor.

It localises to the plastid. The protein localises to the chloroplast thylakoid membrane. The catalysed reaction is reduced [plastocyanin] + hnu + oxidized [2Fe-2S]-[ferredoxin] = oxidized [plastocyanin] + reduced [2Fe-2S]-[ferredoxin]. Its function is as follows. Apoprotein for the two 4Fe-4S centers FA and FB of photosystem I (PSI); essential for photochemical activity. FB is the terminal electron acceptor of PSI, donating electrons to ferredoxin. The C-terminus interacts with PsaA/B/D and helps assemble the protein into the PSI complex. Required for binding of PsaD and PsaE to PSI. PSI is a plastocyanin/cytochrome c6-ferredoxin oxidoreductase, converting photonic excitation into a charge separation, which transfers an electron from the donor P700 chlorophyll pair to the spectroscopically characterized acceptors A0, A1, FX, FA and FB in turn. In Chlorella vulgaris (Green alga), this protein is Photosystem I iron-sulfur center.